Here is a 427-residue protein sequence, read N- to C-terminus: UDP-N-acetylglucosamine 1-carboxyvinyltransferase 1 (427 aa).

Phosphoenolpyruvate is bound at residue 24–25; sequence KN. Position 97 (arginine 97) interacts with UDP-N-acetyl-alpha-D-glucosamine. Cysteine 121 (proton donor) is an active-site residue. Cysteine 121 bears the 2-(S-cysteinyl)pyruvic acid O-phosphothioketal mark. Residues 126 to 130, aspartate 309, and valine 331 contribute to the UDP-N-acetyl-alpha-D-glucosamine site; that span reads RPIDL.

Belongs to the EPSP synthase family. MurA subfamily.

It localises to the cytoplasm. It carries out the reaction phosphoenolpyruvate + UDP-N-acetyl-alpha-D-glucosamine = UDP-N-acetyl-3-O-(1-carboxyvinyl)-alpha-D-glucosamine + phosphate. The protein operates within cell wall biogenesis; peptidoglycan biosynthesis. Functionally, cell wall formation. Adds enolpyruvyl to UDP-N-acetylglucosamine. In Lactococcus lactis subsp. lactis (strain IL1403) (Streptococcus lactis), this protein is UDP-N-acetylglucosamine 1-carboxyvinyltransferase 1.